The primary structure comprises 78 residues: MTDTTPNSAPEEPEITYEAARDELVEIVTRLESGGISLAETMTLWERGEKLADICQSWLNGARARIEAARSDAETAQP.

It belongs to the XseB family. As to quaternary structure, heterooligomer composed of large and small subunits.

The protein resides in the cytoplasm. The enzyme catalyses Exonucleolytic cleavage in either 5'- to 3'- or 3'- to 5'-direction to yield nucleoside 5'-phosphates.. In terms of biological role, bidirectionally degrades single-stranded DNA into large acid-insoluble oligonucleotides, which are then degraded further into small acid-soluble oligonucleotides. This chain is Exodeoxyribonuclease 7 small subunit, found in Cutibacterium acnes (strain DSM 16379 / KPA171202) (Propionibacterium acnes).